A 240-amino-acid chain; its full sequence is Ubiquinone biosynthesis O-methyltransferase (240 aa).

Residues Arg-36, Gly-60, Asp-81, and Leu-123 each coordinate S-adenosyl-L-methionine.

This sequence belongs to the methyltransferase superfamily. UbiG/COQ3 family.

The enzyme catalyses a 3-demethylubiquinol + S-adenosyl-L-methionine = a ubiquinol + S-adenosyl-L-homocysteine + H(+). It carries out the reaction a 3-(all-trans-polyprenyl)benzene-1,2-diol + S-adenosyl-L-methionine = a 2-methoxy-6-(all-trans-polyprenyl)phenol + S-adenosyl-L-homocysteine + H(+). The protein operates within cofactor biosynthesis; ubiquinone biosynthesis. In terms of biological role, O-methyltransferase that catalyzes the 2 O-methylation steps in the ubiquinone biosynthetic pathway. The protein is Ubiquinone biosynthesis O-methyltransferase of Rickettsia bellii (strain OSU 85-389).